The chain runs to 192 residues: Thymidine kinase (192 aa).

Residues 9–16 (SAMNAGKS) and 87–90 (DECQ) contribute to the ATP site. Residue glutamate 88 is the Proton acceptor of the active site. The Zn(2+) site is built by cysteine 145, cysteine 147, cysteine 182, and histidine 185.

It belongs to the thymidine kinase family. In terms of assembly, homotetramer.

Its subcellular location is the cytoplasm. It catalyses the reaction thymidine + ATP = dTMP + ADP + H(+). This chain is Thymidine kinase, found in Vibrio cholerae serotype O1 (strain ATCC 39315 / El Tor Inaba N16961).